Reading from the N-terminus, the 892-residue chain is DNA mismatch repair protein MutS (892 aa).

Residue 607–614 coordinates ATP; the sequence is GPNMSGKS. Residues 826–854 form a disordered region; it reads ETKAETEEESQLSFFGGEQSSKKQDKPVL. The segment covering 845-854 has biased composition (basic and acidic residues); the sequence is SSKKQDKPVL.

This sequence belongs to the DNA mismatch repair MutS family.

This protein is involved in the repair of mismatches in DNA. It is possible that it carries out the mismatch recognition step. This protein has a weak ATPase activity. This is DNA mismatch repair protein MutS from Bacillus cereus (strain AH187).